A 210-amino-acid chain; its full sequence is Proteasome subunit beta (210 aa).

A propeptide spans 1–9 (MDNDKYLKG) (removed in mature form; by autocatalysis). The Nucleophile role is filled by threonine 10.

This sequence belongs to the peptidase T1B family. The 20S proteasome core is composed of 14 alpha and 14 beta subunits that assemble into four stacked heptameric rings, resulting in a barrel-shaped structure. The two inner rings, each composed of seven catalytic beta subunits, are sandwiched by two outer rings, each composed of seven alpha subunits. The catalytic chamber with the active sites is on the inside of the barrel. Has a gated structure, the ends of the cylinder being occluded by the N-termini of the alpha-subunits. Is capped at one or both ends by the proteasome regulatory ATPase, PAN.

It localises to the cytoplasm. The enzyme catalyses Cleavage of peptide bonds with very broad specificity.. With respect to regulation, the formation of the proteasomal ATPase PAN-20S proteasome complex, via the docking of the C-termini of PAN into the intersubunit pockets in the alpha-rings, triggers opening of the gate for substrate entry. Interconversion between the open-gate and close-gate conformations leads to a dynamic regulation of the 20S proteasome proteolysis activity. In terms of biological role, component of the proteasome core, a large protease complex with broad specificity involved in protein degradation. The sequence is that of Proteasome subunit beta from Methanosarcina mazei (strain ATCC BAA-159 / DSM 3647 / Goe1 / Go1 / JCM 11833 / OCM 88) (Methanosarcina frisia).